The following is a 506-amino-acid chain: Galactose/methyl galactoside import ATP-binding protein MglA (506 aa).

2 consecutive ABC transporter domains span residues 14–249 (LEMS…VGRS) and 264–506 (VILE…SLHL). Residue 46–53 (GENGAGKS) participates in ATP binding.

It belongs to the ABC transporter superfamily. Galactose/methyl galactoside importer (TC 3.A.1.2.3) family. As to quaternary structure, the complex is composed of one ATP-binding protein (MglA), two transmembrane proteins (MglC) and a solute-binding protein (MglB).

It is found in the cell inner membrane. The catalysed reaction is D-galactose(out) + ATP + H2O = D-galactose(in) + ADP + phosphate + H(+). It carries out the reaction methyl beta-D-galactoside(out) + ATP + H2O = methyl beta-D-galactoside(in) + ADP + phosphate + H(+). Its function is as follows. Part of the ABC transporter complex MglABC involved in galactose/methyl galactoside import. Responsible for energy coupling to the transport system. This is Galactose/methyl galactoside import ATP-binding protein MglA from Yersinia pestis bv. Antiqua (strain Antiqua).